Consider the following 305-residue polypeptide: uncharacterized protein (305 aa).

The disordered stretch occupies residues 255–305; that stretch reads RCHRAGLRSPPRTREPLWSLGPSGGEAAGEAPGGKGPPTPVLPHARRAGAA. Gly residues predominate over residues 276–288; that stretch reads PSGGEAAGEAPGG.

This is an uncharacterized protein from Streptomyces fradiae (Streptomyces roseoflavus).